Consider the following 278-residue polypeptide: MANYTAADIKALRERTGAGMMDVKKALDEANGDAEKAIEIIRIKGLKGATKREGRSTAEGLVAAKVNGGVGVMIEVNCETDFVAKADKFIQLADKVLNVAVESGAADLETLLATEVDGKPLSEVVVEEGAVLGEKVVVRRISRVEGTTVDAYLHKTSKDLPAQVGVLFAVDGEGEAAATAAHDIAVHVAAMAPNYLTREDVPAELVESERRIAEETAKAEGKPEAALSKIVEGRVTGFYKGEVLVDQAFAKDSKKTVAQVLEEAGVKATAVTRFRVGN.

The tract at residues 80–83 (TDFV) is involved in Mg(2+) ion dislocation from EF-Tu.

Belongs to the EF-Ts family.

It is found in the cytoplasm. Its function is as follows. Associates with the EF-Tu.GDP complex and induces the exchange of GDP to GTP. It remains bound to the aminoacyl-tRNA.EF-Tu.GTP complex up to the GTP hydrolysis stage on the ribosome. The chain is Elongation factor Ts from Paenarthrobacter aurescens (strain TC1).